A 223-amino-acid chain; its full sequence is Putative N-acetylmannosamine-6-phosphate 2-epimerase (223 aa).

Belongs to the NanE family.

The catalysed reaction is an N-acyl-D-glucosamine 6-phosphate = an N-acyl-D-mannosamine 6-phosphate. The protein operates within amino-sugar metabolism; N-acetylneuraminate degradation; D-fructose 6-phosphate from N-acetylneuraminate: step 3/5. Functionally, converts N-acetylmannosamine-6-phosphate (ManNAc-6-P) to N-acetylglucosamine-6-phosphate (GlcNAc-6-P). This Staphylococcus haemolyticus (strain JCSC1435) protein is Putative N-acetylmannosamine-6-phosphate 2-epimerase.